The chain runs to 340 residues: Phenylalanine--tRNA ligase alpha subunit (340 aa).

Residue Glu-254 coordinates Mg(2+).

Belongs to the class-II aminoacyl-tRNA synthetase family. Phe-tRNA synthetase alpha subunit type 1 subfamily. In terms of assembly, tetramer of two alpha and two beta subunits. It depends on Mg(2+) as a cofactor.

The protein localises to the cytoplasm. It carries out the reaction tRNA(Phe) + L-phenylalanine + ATP = L-phenylalanyl-tRNA(Phe) + AMP + diphosphate + H(+). In Caldicellulosiruptor saccharolyticus (strain ATCC 43494 / DSM 8903 / Tp8T 6331), this protein is Phenylalanine--tRNA ligase alpha subunit.